Consider the following 164-residue polypeptide: CB1 cannabinoid receptor-interacting protein 1 (164 aa).

This sequence belongs to the CNRIP family. As to quaternary structure, interacts with the cannabinoid receptor CNR1 (via C-terminus). Does not interact with cannabinoid receptor CNR2. Highly expressed in brain. Also detected in heart, lung, intestine, kidney, testis, spleen, liver and muscle (at protein level).

Its function is as follows. Suppresses cannabinoid receptor CNR1-mediated tonic inhibition of voltage-gated calcium channels. The sequence is that of CB1 cannabinoid receptor-interacting protein 1 (Cnrip1) from Mus musculus (Mouse).